A 1779-amino-acid chain; its full sequence is Fibronectin type III domain-containing protein 1 (1779 aa).

An N-terminal signal peptide occupies residues 1 to 29 (MAPEARASPRLLLRAALLLLAALLPVASS). Fibronectin type-III domains are found at residues 33 to 126 (PVDH…KAPR), 103 to 203 (PNKP…AEED), 207 to 302 (VPED…TPES), and 307 to 402 (APEN…IPTT). The segment covering 400 to 413 (PTTSSTEASVQPNG) has biased composition (polar residues). 4 disordered regions span residues 400–442 (PTTS…MPPA), 459–1108 (NGVA…RNLD), 1120–1227 (EENT…KPNG), and 1330–1401 (PTTT…PPGT). The segment covering 423–437 (QQPSSSAPKVAASSQ) has biased composition (low complexity). A compositionally biased stretch (polar residues) spans 493 to 506 (NPRSSRLETLNQKQ). Basic and acidic residues predominate over residues 534-554 (SRKEGMDRRGPSLDPHPHPRV). Composition is skewed to polar residues over residues 557–570 (SASSAYHQLSSTDN) and 590–607 (SSGSSPKNPGRSRPTSAP). Over residues 629–640 (ASSSTSRQSHSS) the composition is skewed to low complexity. Ser-651 carries the phosphoserine modification. Low complexity predominate over residues 676-694 (HASSSHTTSRTASSSHPSA). At Ser-699 the chain carries Phosphoserine. Residues 707–720 (DSDRAAEDTIRRAE) show a composition bias toward basic and acidic residues. Composition is skewed to polar residues over residues 763 to 784 (PSVSPQSTSASKVLTRSPSLPA) and 861 to 875 (PLSSKAQGFQQSTTD). The span at 879-904 (PQTSPASTSRQPSPARPPASRSQPSP) shows a compositional bias: low complexity. 2 stretches are compositionally biased toward polar residues: residues 957–971 (APQNQNEGAQSTYED) and 1003–1020 (VGSQSWSSDNRPQPSQAG). A compositionally biased stretch (low complexity) spans 1085–1097 (LSTSVKKWPSSSS). Basic and acidic residues predominate over residues 1098-1108 (PRDKYADRNLD). Polar residues-rich tracts occupy residues 1147–1159 (NPATASPIANTHS) and 1166–1177 (RAPSSYSSTTPM). The span at 1330–1389 (PTTTMPPSTTTTTVPPTTTLPPTTTTTRRTTTTRRTTTTRRPTTTTRATRRTTTTTTTPE) shows a compositional bias: low complexity. Residues 1543-1637 (APRNITVVAM…PSVSFVTESD (95 aa)) enclose the Fibronectin type-III 5 domain. Asn-1546 carries an N-linked (GlcNAc...) asparagine glycan.

It is found in the secreted. Functionally, may be an activator of G protein signaling. This chain is Fibronectin type III domain-containing protein 1 (Fndc1), found in Rattus norvegicus (Rat).